The chain runs to 1505 residues: Anaphase-promoting complex subunit 1 (1505 aa).

Belongs to the APC1 family. As to quaternary structure, the APC/C complex is probably composed of at least 12 subunits: apc-2, apc-10, apc-11, cdc-26, emb-1, emb-27, emb-30, mat-1, mat-2, mat-3, such-1 and gfi-3.

It functions in the pathway protein modification; protein ubiquitination. Functionally, probable component of the anaphase promoting complex/cyclosome (APC/C), a cell cycle-regulated E3 ubiquitin ligase that controls progression through mitosis and the G1 phase of the cell cycle. The APC/C complex acts by mediating ubiquitination and subsequent degradation of target proteins. Developmental role in early embryogenesis and the metaphase to anaphase transition in oocyte and spermatocyte meiosis and mitosis in germ cells. Required for embryonic anterior-posterior axis formation. Plays a role in regulating the abundance of glr-1 receptors in postmitotic neurons, which may in turn control animal locomotion. Involved in regulating GABA neurotransmitter release at neuromuscular junctions in GABA motor neurons. The sequence is that of Anaphase-promoting complex subunit 1 from Caenorhabditis elegans.